A 101-amino-acid polypeptide reads, in one-letter code: Small ribosomal subunit protein bS18c (101 aa).

It belongs to the bacterial ribosomal protein bS18 family. As to quaternary structure, part of the 30S ribosomal subunit.

It is found in the plastid. Its subcellular location is the chloroplast. The chain is Small ribosomal subunit protein bS18c from Carica papaya (Papaya).